The primary structure comprises 430 residues: Serine hydroxymethyltransferase (430 aa).

120–122 (GHI) is a (6S)-5,6,7,8-tetrahydrofolate binding site. An N6-(pyridoxal phosphate)lysine modification is found at K226.

The protein belongs to the SHMT family. As to quaternary structure, homodimer. Pyridoxal 5'-phosphate is required as a cofactor.

The protein resides in the cytoplasm. It participates in amino-acid biosynthesis; glycine biosynthesis; glycine from L-serine: step 1/1. In terms of biological role, catalyzes the reversible interconversion of serine and glycine with a modified folate serving as the one-carbon carrier. Also exhibits a pteridine-independent aldolase activity toward beta-hydroxyamino acids, producing glycine and aldehydes, via a retro-aldol mechanism. The protein is Serine hydroxymethyltransferase of Pyrobaculum calidifontis (strain DSM 21063 / JCM 11548 / VA1).